Reading from the N-terminus, the 371-residue chain is uncharacterized protein (371 aa).

The ABC transporter domain occupies 20–250; sequence VTIRNVTKRY…PANIFVAGFI (231 aa). 52 to 59 contributes to the ATP binding site; it reads GPSGCGKS.

It belongs to the ABC transporter superfamily.

It localises to the cell inner membrane. Functionally, probably part of a binding-protein-dependent transport system y4oPQRS. This system probably transports a sugar-like molecule. Probably responsible for energy coupling to the transport system. This is an uncharacterized protein from Sinorhizobium fredii (strain NBRC 101917 / NGR234).